The sequence spans 511 residues: Ribose import ATP-binding protein RbsA (511 aa).

ABC transporter domains follow at residues leucine 7–glutamate 242 and cysteine 256–glutamine 500. Glycine 39–serine 46 contributes to the ATP binding site.

The protein belongs to the ABC transporter superfamily. Ribose importer (TC 3.A.1.2.1) family. As to quaternary structure, the complex is composed of an ATP-binding protein (RbsA), two transmembrane proteins (RbsC) and a solute-binding protein (RbsB).

The protein resides in the cell inner membrane. It catalyses the reaction D-ribose(out) + ATP + H2O = D-ribose(in) + ADP + phosphate + H(+). In terms of biological role, part of the ABC transporter complex RbsABC involved in ribose import. Responsible for energy coupling to the transport system. This is Ribose import ATP-binding protein RbsA from Ruegeria sp. (strain TM1040) (Silicibacter sp.).